The primary structure comprises 185 residues: 4-nitrophenol 4-monooxygenase/4-nitrocatechol 2-monooxygenase, reductase component (185 aa).

Belongs to the non-flavoprotein flavin reductase family. As to quaternary structure, the 4-NP/4-NCA monooxygenase is composed of an oxygenase component NpcA and a reductase component NpcB.

It catalyses the reaction 4-nitrophenol + NADH + O2 + H(+) = 4-nitrocatechol + NAD(+) + H2O. It carries out the reaction 4-nitrocatechol + NADPH + O2 = 2-hydroxy-1,4-benzoquinone + nitrite + NADP(+) + H2O. The enzyme catalyses 4-nitrocatechol + NADH + O2 = 2-hydroxy-1,4-benzoquinone + nitrite + NAD(+) + H2O. It functions in the pathway aromatic compound metabolism. It participates in xenobiotic degradation. Inhibited by methimazole. Involved in the degradation of para-nitrophenol (4-NP). Catalyzes both the initial hydroxylation of 4-NP to produce 4-nitrocatechol (4-NCA) and the subsequent oxidative release of the nitro group from 4-NCA to produce 2-hydroxy-1,4-benzoquinone. It can also use 4-nitroresorcinol as substrate with a rate of nitrite release similar to that observed with the two physiological substrates, 4-PN and 4-NCA. This is 4-nitrophenol 4-monooxygenase/4-nitrocatechol 2-monooxygenase, reductase component (npcB) from Rhodococcus opacus (Nocardia opaca).